Reading from the N-terminus, the 562-residue chain is Probable malate:quinone oxidoreductase (562 aa).

Positions Ser535 to Leu562 are disordered. A compositionally biased stretch (polar residues) spans Pro545–Leu562.

It belongs to the MQO family. Requires FAD as cofactor.

It carries out the reaction (S)-malate + a quinone = a quinol + oxaloacetate. It participates in carbohydrate metabolism; tricarboxylic acid cycle; oxaloacetate from (S)-malate (quinone route): step 1/1. The protein is Probable malate:quinone oxidoreductase of Xylella fastidiosa (strain M23).